A 126-amino-acid chain; its full sequence is Holo-[acyl-carrier-protein] synthase (126 aa).

Residues Asp9 and Glu58 each contribute to the Mg(2+) site.

The protein belongs to the P-Pant transferase superfamily. AcpS family. It depends on Mg(2+) as a cofactor.

It localises to the cytoplasm. It carries out the reaction apo-[ACP] + CoA = holo-[ACP] + adenosine 3',5'-bisphosphate + H(+). Its function is as follows. Transfers the 4'-phosphopantetheine moiety from coenzyme A to a Ser of acyl-carrier-protein. In Enterobacter sp. (strain 638), this protein is Holo-[acyl-carrier-protein] synthase.